We begin with the raw amino-acid sequence, 267 residues long: Tryptophan synthase alpha chain (267 aa).

Residues Glu49 and Asp60 each act as proton acceptor in the active site.

The protein belongs to the TrpA family. Tetramer of two alpha and two beta chains.

It catalyses the reaction (1S,2R)-1-C-(indol-3-yl)glycerol 3-phosphate + L-serine = D-glyceraldehyde 3-phosphate + L-tryptophan + H2O. The protein operates within amino-acid biosynthesis; L-tryptophan biosynthesis; L-tryptophan from chorismate: step 5/5. In terms of biological role, the alpha subunit is responsible for the aldol cleavage of indoleglycerol phosphate to indole and glyceraldehyde 3-phosphate. The chain is Tryptophan synthase alpha chain from Geotalea uraniireducens (strain Rf4) (Geobacter uraniireducens).